Consider the following 632-residue polypeptide: Tetratricopeptide repeat protein 39B (632 aa).

TPR repeat units follow at residues 343-376 (SLVL…QEEW), 535-568 (CLVK…EKLL), and 576-609 (PFTL…YKDY).

It belongs to the TTC39 family.

Functionally, regulates high density lipoprotein (HDL) cholesterol metabolism by promoting the ubiquitination and degradation of the oxysterols receptors LXR (NR1H2 and NR1H3). The sequence is that of Tetratricopeptide repeat protein 39B (TTC39B) from Macaca fascicularis (Crab-eating macaque).